Consider the following 556-residue polypeptide: Solute carrier family 22 member 1 (556 aa).

The Cytoplasmic segment spans residues 1-21; that stretch reads MPTVDDVLEQVGEFGWFQKQA. A helical membrane pass occupies residues 22 to 42; that stretch reads FLLLCLISASLAPIYVGIVFL. Residues 43 to 150 lie on the Extracellular side of the membrane; it reads GFTPGHYCQN…LVCGDAWKVD (108 aa). Asn71 is a glycosylation site (N-linked (GlcNAc...) asparagine). A helical membrane pass occupies residues 151–171; it reads LFQSCVNLGFFLGSLVVGYIA. Residues 172 to 177 lie on the Cytoplasmic side of the membrane; sequence DRFGRK. Residues 178-198 form a helical membrane-spanning segment; sequence LCLLVTTLVTSVSGVLTAVAP. The Extracellular portion of the chain corresponds to 199 to 211; it reads DYTSMLLFRLLQG. Residues 212–231 traverse the membrane as a helical segment; sequence MVSKGSWVSGYTLITEFVGS. At 232–238 the chain is on the cytoplasmic side; sequence GYRRTTA. The helical transmembrane segment at 239–259 threads the bilayer; it reads ILYQMAFTVGLVGLAGVAYAI. The Extracellular segment spans residues 260 to 263; that stretch reads PDWR. Residues 264-284 form a helical membrane-spanning segment; that stretch reads WLQLAVSLPTFLFLLYYWFVP. The Proline-rich sequence signature appears at 284-288; that stretch reads PESPR. Topologically, residues 285–348 are cytoplasmic; sequence ESPRWLLSQK…FRTPNLRKHT (64 aa). Ser334 is subject to Phosphoserine. The helical transmembrane segment at 349-369 threads the bilayer; it reads VILMYLWFSCAVLYQGLIMHV. The Extracellular portion of the chain corresponds to 370 to 377; that stretch reads GATGANLY. A helical membrane pass occupies residues 378-398; that stretch reads LDFFYSSLVEFPAAFIILVTI. The Cytoplasmic portion of the chain corresponds to 399 to 403; the sequence is DRIGR. The chain crosses the membrane as a helical span at residues 404 to 424; that stretch reads IYPIAASNLVTGAACLLMIFI. Residues 425–429 lie on the Extracellular side of the membrane; it reads PHELH. The chain crosses the membrane as a helical span at residues 430-452; that stretch reads WLNVTLACLGRMGATIVLQMVCL. At 453–465 the chain is on the cytoplasmic side; that stretch reads VNAELYPTFIRNL. Residues 466–486 form a helical membrane-spanning segment; sequence GMMVCSALCDLGGIFTPFMVF. The Extracellular portion of the chain corresponds to 487–493; the sequence is RLMEVWQ. The chain crosses the membrane as a helical span at residues 494–514; that stretch reads ALPLILFGVLGLTAGAMTLLL. Over 515–556 the chain is Cytoplasmic; it reads PETKGVALPETIEEAENLGRRKSKAKENTIYLQVQTGKSSST. Thr543 is subject to Phosphothreonine.

This sequence belongs to the major facilitator (TC 2.A.1) superfamily. Organic cation transporter (TC 2.A.1.19) family. Phosphorylated. Expressed in kidney cortex in S1, S2 segments of renal proximal tubules as well as in kidney medulla. Expressed throughout the liver lobuli, in hepatocytes surrounding the central veins. Expressed in enterocytes of villi and crypts in small intestine. Expressed in brain, in some white matter regions like the corpus callosum and in the granular layer of the cerebellum. Expressed in Sertoli cells in testis. Expressed in colon. Expressed in tracheal and bronchial ciliated epithelium in the respiratory tract. Expressed in spleen, moderately in skin, and weakly in the gastrointestinal tract, lung, thymus, muscle, and prostate. As to expression, expressed in kidney cortex and medulla. Expressed in intestine, liver and colon.

The protein resides in the basolateral cell membrane. It localises to the apical cell membrane. Its subcellular location is the lateral cell membrane. It is found in the basal cell membrane. The protein localises to the cell membrane. The enzyme catalyses 1-methylnicotinamide(out) = 1-methylnicotinamide(in). It carries out the reaction dopamine(out) = dopamine(in). It catalyses the reaction serotonin(out) = serotonin(in). The catalysed reaction is (R)-adrenaline(out) = (R)-adrenaline(in). The enzyme catalyses (R)-noradrenaline(out) = (R)-noradrenaline(in). It carries out the reaction histamine(out) = histamine(in). It catalyses the reaction guanidine(out) = guanidine(in). The catalysed reaction is choline(out) = choline(in). The enzyme catalyses acetylcholine(in) = acetylcholine(out). It carries out the reaction thiamine(in) = thiamine(out). It catalyses the reaction agmatine(out) = agmatine(in). The catalysed reaction is putrescine(out) = putrescine(in). The enzyme catalyses spermidine(in) = spermidine(out). It carries out the reaction (R)-carnitine(in) = (R)-carnitine(out). It catalyses the reaction O-isobutanoyl-(R)-carnitine(in) = O-isobutanoyl-(R)-carnitine(out). The catalysed reaction is O-acetyl-(R)-carnitine(in) = O-acetyl-(R)-carnitine(out). The enzyme catalyses O-3-hydroxybutanoyl-(R)-carnitine(in) = O-3-hydroxybutanoyl-(R)-carnitine(out). It carries out the reaction O-propanoyl-(R)-carnitine(in) = O-propanoyl-(R)-carnitine(out). It catalyses the reaction O-butanoyl-(R)-carnitine(in) = O-butanoyl-(R)-carnitine(out). The catalysed reaction is O-2-methylbutanoyl-(R)-carnitine(in) = O-2-methylbutanoyl-(R)-carnitine(out). The enzyme catalyses O-3-methylbutanoyl-(R)-carnitine(in) = O-3-methylbutanoyl-(R)-carnitine(out). It carries out the reaction O-hexanoyl-(R)-carnitine(in) = O-hexanoyl-(R)-carnitine(out). It catalyses the reaction L-histidyl-L-proline diketopiperazine(in) = L-histidyl-L-proline diketopiperazine(out). The catalysed reaction is (R)-salsolinol(in) = (R)-salsolinol(out). The enzyme catalyses prostaglandin F2alpha(out) = prostaglandin F2alpha(in). It carries out the reaction prostaglandin E2(out) = prostaglandin E2(in). Phosphorylation of the transporter leads to changes in its substrate affinity, resulting in a regulation of the transport activity. In contrast with human ortholog, ASP uptake is stimulated by protein kinase A (PKA) and C (PKC) and endogenous tyrosine kinase activation. ASP affinity is induced by PKC-dependent phosphorylation. Inhibited by cGMP, most likely through a cGMP-binding protein that interacts with OCT1. Its function is as follows. Electrogenic voltage-dependent transporter that mediates the transport of a variety of organic cations such as endogenous bioactive amines, cationic drugs and xenobiotics. Functions as a pH- and Na(+)-independent, bidirectional transporter. Cation cellular uptake or release is driven by the electrochemical potential (i.e. membrane potential and concentration gradient) and substrate selectivity. Hydrophobicity is a major requirement for recognition in polyvalent substrates and inhibitors. Primarily expressed in the basolateral membrane of hepatocytes and proximal tubules and involved in the uptake and disposition of cationic compounds from the blood by hepatic and renal clearance. Most likely functions as an uptake carrier in enterocytes contributing to the intestinal excretion and elimination of organic cations from the systemic circulation. Transports endogenous monoamines such as N-1-methylnicotinamide (NMN), guanidine, neurotransmitters dopamine, serotonin, noradrenaline, adrenaline and histamine, and quaternary ammonium compound such as choline. Also transports natural polyamines such as spermidine, agmatine and putrescine at low affinity, but relatively high turnover. Involved in the hepatic uptake of vitamin B1/thiamine, hence regulating hepatic lipid and energy metabolism. Contributes to the influx and efflux of fatty acid carriers carnitines and acylcarnitines across the basolateral membrane of hepatocytes, from the liver to the systemic circulation and inversely and may be involved in regulating the systemic availability of hepatic acylcarnitines. Mediates the bidirectional transport of acetylcholine (ACh) at the apical membrane of ciliated cell in airway epithelium, thereby playing a role in luminal release of ACh from bronchial epithelium. Transports dopaminergic neuromodulators cyclo(his-pro) and salsolinol with lower efficency. Also capable of transporting non-amine endogenous compounds such as prostaglandin E2 (PGE2) and prostaglandin F2-alpha (PGF2-alpha). May contribute to the transport of cationic compounds in testis across the blood-testis-barrier. Also mediates the uptake of xenobiotics tributylmethylammonium (TBuMA), quinidine, N-methyl-quinine (NMQ), N-methyl-quinidine (NMQD) N-(4,4-azo-n-pentyl)-quinuclidine (APQ), azidoprocainamide methoiodide (AMP), N-(4,4-azo-n-pentyl)-21-deoxyajmalinium (APDA) and 4-(4-(dimethylamino)styryl)-N-methylpyridinium (ASP). Functional isoform capable of transporting TEA. In Rattus norvegicus (Rat), this protein is Solute carrier family 22 member 1.